The primary structure comprises 395 residues: L-methionine gamma-lyase (395 aa).

Pyridoxal 5'-phosphate-binding positions include 56-58 (YTR) and 86-87 (GM). Tyr-111 serves as a coordination point for substrate. 206–208 (SAT) is a pyridoxal 5'-phosphate binding site. The residue at position 209 (Lys-209) is an N6-(pyridoxal phosphate)lysine. Arg-373 contacts substrate.

The protein belongs to the trans-sulfuration enzymes family. L-methionine gamma-lyase subfamily. Homotetramer. It depends on pyridoxal 5'-phosphate as a cofactor.

It catalyses the reaction L-methionine + H2O = methanethiol + 2-oxobutanoate + NH4(+). It carries out the reaction L-homocysteine + H2O = 2-oxobutanoate + hydrogen sulfide + NH4(+) + H(+). The enzyme catalyses L-cysteine + H2O = hydrogen sulfide + pyruvate + NH4(+) + H(+). In terms of biological role, catalyzes the alpha,gamma-elimination of L-methionine to produce methanethiol, 2-oxobutanoate and ammonia, and that of L-homocysteine. Can also use L-cysteine as substrate, catalyzing its alpha,beta-elimination; this activity seems to only minimally contribute to the production of hydrogen sulfide (H2S) by F.nucleatum in the oral cavity, which is toxic for a large variety of cells in periodontal regions. The protein is L-methionine gamma-lyase of Fusobacterium nucleatum subsp. nucleatum (strain ATCC 25586 / DSM 15643 / BCRC 10681 / CIP 101130 / JCM 8532 / KCTC 2640 / LMG 13131 / VPI 4355).